Reading from the N-terminus, the 778-residue chain is Ribonucleoside-diphosphate reductase large subunit (778 aa).

Substrate contacts are provided by residues serine 177, 192–193, glycine 221, 419–423, and 613–617; these read SC, NLCIE, and PTATS. A disulfide bridge connects residues cysteine 193 and cysteine 439. Asparagine 419 functions as the Proton acceptor in the catalytic mechanism. Cysteine 421 acts as the Cysteine radical intermediate in catalysis. Glutamate 423 serves as the catalytic Proton acceptor.

Belongs to the ribonucleoside diphosphate reductase large chain family. Heterotetramer composed of a homodimer of the large subunit (R1) and a homodimer of the small subunit (R2). Larger multisubunit protein complex are also active, composed of (R1)n(R2)n.

The enzyme catalyses a 2'-deoxyribonucleoside 5'-diphosphate + [thioredoxin]-disulfide + H2O = a ribonucleoside 5'-diphosphate + [thioredoxin]-dithiol. With respect to regulation, under complex allosteric control mediated by deoxynucleoside triphosphates and ATP binding. The type of nucleotide bound at the specificity site determines substrate preference. It seems probable that ATP makes the enzyme reduce CDP and UDP, dGTP favors ADP reduction and dTTP favors GDP reduction. Functionally, ribonucleoside-diphosphate reductase holoenzyme provides the precursors necessary for viral DNA synthesis. Allows virus growth in non-dividing cells. Catalyzes the biosynthesis of deoxyribonucleotides from the corresponding ribonucleotides. This is Ribonucleoside-diphosphate reductase large subunit from African swine fever virus (isolate Tick/South Africa/Pretoriuskop Pr4/1996) (ASFV).